Here is a 296-residue protein sequence, read N- to C-terminus: DNA primase small subunit PriS (296 aa).

Active-site residues include Asp82, Asp84, and Asp191.

It belongs to the eukaryotic-type primase small subunit family. As to quaternary structure, heterodimer of a small subunit (PriS) and a large subunit (PriL). Mg(2+) serves as cofactor. The cofactor is Mn(2+).

Functionally, catalytic subunit of DNA primase, an RNA polymerase that catalyzes the synthesis of short RNA molecules used as primers for DNA polymerase during DNA replication. The small subunit contains the primase catalytic core and has DNA synthesis activity on its own. Binding to the large subunit stabilizes and modulates the activity, increasing the rate of DNA synthesis while decreasing the length of the DNA fragments, and conferring RNA synthesis capability. The DNA polymerase activity may enable DNA primase to also catalyze primer extension after primer synthesis. May also play a role in DNA repair. The sequence is that of DNA primase small subunit PriS from Methanopyrus kandleri (strain AV19 / DSM 6324 / JCM 9639 / NBRC 100938).